Consider the following 346-residue polypeptide: 3 beta-hydroxysteroid dehydrogenase/Delta 5--&gt;4-isomerase (346 aa).

The Proton acceptor role is filled by Tyr147. Lys151 contributes to the NAD(+) binding site.

The protein belongs to the 3-beta-HSD family.

It carries out the reaction a 3beta-hydroxy-Delta(5)-steroid + NAD(+) = a 3-oxo-Delta(5)-steroid + NADH + H(+). The catalysed reaction is a 3-oxo-Delta(5)-steroid = a 3-oxo-Delta(4)-steroid. It functions in the pathway lipid metabolism; steroid biosynthesis. Catalyzes the oxidative conversion of Delta(5)-ene-3-beta-hydroxy steroid, and the oxidative conversion of ketosteroids. The 3-beta-HSD enzymatic system plays a crucial role in the biosynthesis of all classes of hormonal steroids. During viral infection, steroid production contributes to virulence by inhibiting the host inflammatory response. This Homo sapiens (Human) protein is 3 beta-hydroxysteroid dehydrogenase/Delta 5--&gt;4-isomerase (OPG174).